Reading from the N-terminus, the 156-residue chain is Small ribosomal subunit protein uS7 (156 aa).

The protein belongs to the universal ribosomal protein uS7 family. As to quaternary structure, part of the 30S ribosomal subunit. Contacts proteins S9 and S11.

In terms of biological role, one of the primary rRNA binding proteins, it binds directly to 16S rRNA where it nucleates assembly of the head domain of the 30S subunit. Is located at the subunit interface close to the decoding center, probably blocks exit of the E-site tRNA. In Photorhabdus laumondii subsp. laumondii (strain DSM 15139 / CIP 105565 / TT01) (Photorhabdus luminescens subsp. laumondii), this protein is Small ribosomal subunit protein uS7.